A 909-amino-acid chain; its full sequence is MKLNRLWFCLLIIIPGFLVAAYLGSHFLTDWYWFAEVGYRQVFLTRLLSEVGIRLGTIAFFFLFFYLNLLFTRKSLHLSPPEGRENWTLKEYLIDRFITSRRLGILYLLLSLAGALIFSPLAAGKWLVVQEYLRATPFGLADPLFGRDVSFYIFKLPLYHFLYKLLITAVVGAVLVTGFFYFIFNPRELLGLRRGHFSRPLVHFSTLVALLFLIQAWGFRLQALDLVRSSRGVAFGASYTDIHALLPGYNILGWVAVACGLIIVLNAFRRNLKLVSAGILSFMAAYFLLVIAVPLAVQKFQVEPNEFAREEPYLRYNINFTRRAYGLDRITIQEFPALDNLTPASLREEGATLDNIRLWDYRPLEQTYSQLQEIRSYYSFKDIDVDRYTLDGRERQVMLAARELDQNKLPDRARTWINEKMRYTHGYGLAMNPANTVTAGGQPEFIAGDLPFHSSAGLQVNEPRIYYGELTGDYVITGGTAAEFDYPVTGEDNFVETRYQGRGGVPINTPWRRLVFAFRFHDYRLLMSNGLTPQSKILYYRNIQERVRKIMPYLRYDADPYLVVAGGRLYWFLDAYTITNMYPYSEPNSGGFNYIRNSVKVVIDAYNGSVDYYLVDPGDPLAQTLARIFPGLFKPREDMPAGLQQHLRYPPDLLSIQAQMLTNYHMENTMLFYNKEDAWSIAEEMVGDKRQAMDPYYTLMRLPGETQAEYILMLPFTPARKVNMIAWLAARNDGPHYGQLLLYQFPKNRSIYGPMQVEARIDQEPRISQQLTLWDQHGSQVIRGNLLVIPIKGSLLYVEPIFLQAQESKLPELRQVVVAYEEKIAMADTLAGALQVIFGTQTPAPAASPQPPSQAATGSPGNLSELIKEANRLYSEAQDRLKQGDWAGYGENLKKLEQVLQEMGQKVAE.

Transmembrane regions (helical) follow at residues 8-28 (FCLL…SHFL), 51-71 (VGIR…NLLF), 103-123 (LGIL…PLAA), 165-185 (LLIT…FIFN), 201-221 (LVHF…GFRL), 245-265 (LLPG…IIVL), and 277-297 (AGIL…PLAV). The segment at 843–862 (PAPAASPQPPSQAATGSPGN) is disordered.

This sequence belongs to the UPF0182 family.

The protein localises to the cell membrane. In Moorella thermoacetica (strain ATCC 39073 / JCM 9320), this protein is UPF0182 protein Moth_1139.